We begin with the raw amino-acid sequence, 293 residues long: Bifunctional protein FolD (293 aa).

NADP(+) is bound by residues 169–171 (GRG), Thr196, and Val237.

The protein belongs to the tetrahydrofolate dehydrogenase/cyclohydrolase family. Homodimer.

The catalysed reaction is (6R)-5,10-methylene-5,6,7,8-tetrahydrofolate + NADP(+) = (6R)-5,10-methenyltetrahydrofolate + NADPH. The enzyme catalyses (6R)-5,10-methenyltetrahydrofolate + H2O = (6R)-10-formyltetrahydrofolate + H(+). It participates in one-carbon metabolism; tetrahydrofolate interconversion. Catalyzes the oxidation of 5,10-methylenetetrahydrofolate to 5,10-methenyltetrahydrofolate and then the hydrolysis of 5,10-methenyltetrahydrofolate to 10-formyltetrahydrofolate. This Leifsonia xyli subsp. xyli (strain CTCB07) protein is Bifunctional protein FolD.